The sequence spans 342 residues: Ferredoxin--NADP reductase (342 aa).

The FAD site is built by C17, D36, Q44, Y49, V89, F124, D289, and T330.

The protein belongs to the ferredoxin--NADP reductase type 2 family. Homodimer. FAD is required as a cofactor.

The catalysed reaction is 2 reduced [2Fe-2S]-[ferredoxin] + NADP(+) + H(+) = 2 oxidized [2Fe-2S]-[ferredoxin] + NADPH. The sequence is that of Ferredoxin--NADP reductase from Bradyrhizobium diazoefficiens (strain JCM 10833 / BCRC 13528 / IAM 13628 / NBRC 14792 / USDA 110).